A 354-amino-acid chain; its full sequence is Fructose-bisphosphate aldolase 2 (354 aa).

S50 is a D-glyceraldehyde 3-phosphate binding site. Catalysis depends on D83, which acts as the Proton donor. Positions 84, 105, 142, and 198 each coordinate Zn(2+). G199 is a binding site for dihydroxyacetone phosphate. A Zn(2+)-binding site is contributed by H232. Residues G233–S235 and N275–T278 contribute to the dihydroxyacetone phosphate site.

This sequence belongs to the class II fructose-bisphosphate aldolase family. As to quaternary structure, homodimer. Zn(2+) serves as cofactor.

It catalyses the reaction beta-D-fructose 1,6-bisphosphate = D-glyceraldehyde 3-phosphate + dihydroxyacetone phosphate. The protein operates within carbohydrate biosynthesis; Calvin cycle. It functions in the pathway carbohydrate degradation; glycolysis; D-glyceraldehyde 3-phosphate and glycerone phosphate from D-glucose: step 4/4. Functionally, catalyzes the aldol condensation of dihydroxyacetone phosphate (DHAP or glycerone-phosphate) with glyceraldehyde 3-phosphate (G3P) to form fructose 1,6-bisphosphate (FBP) in gluconeogenesis and the reverse reaction in glycolysis. The protein is Fructose-bisphosphate aldolase 2 (cfxB) of Cereibacter sphaeroides (Rhodobacter sphaeroides).